We begin with the raw amino-acid sequence, 223 residues long: Small ribosomal subunit protein uS3 (223 aa).

The 77-residue stretch at 39-115 folds into the KH type-2 domain; it reads IRKYIEKNLA…RVFINIVEIK (77 aa).

This sequence belongs to the universal ribosomal protein uS3 family. In terms of assembly, part of the 30S ribosomal subunit. Forms a tight complex with proteins S10 and S14.

Functionally, binds the lower part of the 30S subunit head. Binds mRNA in the 70S ribosome, positioning it for translation. In Leuconostoc mesenteroides subsp. mesenteroides (strain ATCC 8293 / DSM 20343 / BCRC 11652 / CCM 1803 / JCM 6124 / NCDO 523 / NBRC 100496 / NCIMB 8023 / NCTC 12954 / NRRL B-1118 / 37Y), this protein is Small ribosomal subunit protein uS3.